Here is a 341-residue protein sequence, read N- to C-terminus: L-threonine 3-dehydrogenase (341 aa).

Cysteine 38 provides a ligand contact to Zn(2+). Residues threonine 40 and histidine 43 each act as charge relay system in the active site. Histidine 63, glutamate 64, cysteine 93, cysteine 96, cysteine 99, and cysteine 107 together coordinate Zn(2+). NAD(+)-binding positions include isoleucine 175, aspartate 195, arginine 200, 262-264 (LGI), and 286-287 (IY).

The protein belongs to the zinc-containing alcohol dehydrogenase family. As to quaternary structure, homotetramer. It depends on Zn(2+) as a cofactor.

The protein resides in the cytoplasm. The catalysed reaction is L-threonine + NAD(+) = (2S)-2-amino-3-oxobutanoate + NADH + H(+). It functions in the pathway amino-acid degradation; L-threonine degradation via oxydo-reductase pathway; glycine from L-threonine: step 1/2. Catalyzes the NAD(+)-dependent oxidation of L-threonine to 2-amino-3-ketobutyrate. The chain is L-threonine 3-dehydrogenase from Shewanella woodyi (strain ATCC 51908 / MS32).